The sequence spans 264 residues: COP9 signalosome complex subunit 7b (264 aa).

An N-acetylalanine modification is found at Ala-2. Residues Ala-2–Gly-159 form the PCI domain. Residues Arg-194 to Glu-237 are a coiled coil. The segment covering Thr-223–Glu-232 has biased composition (polar residues). The tract at residues Thr-223–His-264 is disordered. The span at Leu-235–Gln-248 shows a compositional bias: basic and acidic residues.

This sequence belongs to the CSN7/EIF3M family. CSN7 subfamily. As to quaternary structure, component of the CSN complex, composed of COPS1/GPS1, COPS2, COPS3, COPS4, COPS5, COPS6, COPS7 (COPS7A or COPS7B) and COPS8 and COPS9. In the complex, it probably interacts directly with COPS1, COPS2, COPS4, COPS5, COPS6 and COPS8. Interacts with EIF3S6.

It localises to the cytoplasm. The protein localises to the nucleus. Component of the COP9 signalosome complex (CSN), a complex involved in various cellular and developmental processes. The CSN complex is an essential regulator of the ubiquitin (Ubl) conjugation pathway by mediating the deneddylation of the cullin subunits of SCF-type E3 ligase complexes, leading to decrease the Ubl ligase activity of SCF-type complexes such as SCF, CSA or DDB2. The complex is also involved in phosphorylation of p53/TP53, JUN, I-kappa-B-alpha/NFKBIA, ITPK1 and IRF8/ICSBP, possibly via its association with CK2 and PKD kinases. CSN-dependent phosphorylation of TP53 and JUN promotes and protects degradation by the Ubl system, respectively. The polypeptide is COP9 signalosome complex subunit 7b (Cops7b) (Mus musculus (Mouse)).